Reading from the N-terminus, the 560-residue chain is Nucleoprotein (560 aa).

The segment at 54 to 236 is binding site for the cap structure m7GTP; the sequence is LRKSKRGDTD…ITKDESALNI (183 aa). Mn(2+)-binding residues include Asp-380 and Glu-382. 4 residues coordinate Zn(2+): Glu-390, Cys-497, His-500, and Cys-521. Asp-525 contributes to the Mn(2+) binding site.

The protein belongs to the arenaviridae nucleocapsid protein family. As to quaternary structure, homomultimerizes to form the nucleocapsid. Binds to viral genomic RNA. Interacts with glycoprotein G2. Interacts with protein Z; this interaction probably directs the encapsidated genome to budding sites. Interacts with protein L; this interaction does not interfere with Z-L interaction. Interacts with host IKBKE (via Protein kinase domain); the interaction inhibits IKBKE kinase activity.

It localises to the virion. The protein localises to the host cytoplasm. Encapsidates the genome, protecting it from nucleases. The encapsidated genomic RNA is termed the nucleocapsid (NC). Serves as template for viral transcription and replication. The increased presence of protein N in host cell does not seem to trigger the switch from transcription to replication as observed in other negative strain RNA viruses. Through the interaction with host IKBKE, strongly inhibits the phosphorylation and nuclear translocation of host IRF3, a protein involved in interferon activation pathway, leading to the inhibition of interferon-beta and IRF3-dependent promoters activation. Also encodes a functional 3'-5' exoribonuclease that degrades preferentially dsRNA substrates and thereby participates in the suppression of interferon induction. The chain is Nucleoprotein from Homo sapiens (Human).